Reading from the N-terminus, the 195-residue chain is ATP-dependent Clp protease proteolytic subunit (195 aa).

The active-site Nucleophile is the Ser-99. His-124 is an active-site residue.

This sequence belongs to the peptidase S14 family. In terms of assembly, fourteen ClpP subunits assemble into 2 heptameric rings which stack back to back to give a disk-like structure with a central cavity, resembling the structure of eukaryotic proteasomes.

It localises to the cytoplasm. It carries out the reaction Hydrolysis of proteins to small peptides in the presence of ATP and magnesium. alpha-casein is the usual test substrate. In the absence of ATP, only oligopeptides shorter than five residues are hydrolyzed (such as succinyl-Leu-Tyr-|-NHMec, and Leu-Tyr-Leu-|-Tyr-Trp, in which cleavage of the -Tyr-|-Leu- and -Tyr-|-Trp bonds also occurs).. Functionally, cleaves peptides in various proteins in a process that requires ATP hydrolysis. Has a chymotrypsin-like activity. Plays a major role in the degradation of misfolded proteins. The protein is ATP-dependent Clp protease proteolytic subunit of Caldicellulosiruptor saccharolyticus (strain ATCC 43494 / DSM 8903 / Tp8T 6331).